The chain runs to 256 residues: Pimeloyl-[acyl-carrier protein] methyl ester esterase (256 aa).

The AB hydrolase-1 domain occupies V17–H241. Substrate is bound by residues W23, S83–L84, and F145–Q149. Catalysis depends on S83, which acts as the Nucleophile. Residues D207 and H235 contribute to the active site. H235 is a binding site for substrate.

This sequence belongs to the AB hydrolase superfamily. Carboxylesterase BioH family. Monomer.

The protein resides in the cytoplasm. It catalyses the reaction 6-carboxyhexanoyl-[ACP] methyl ester + H2O = 6-carboxyhexanoyl-[ACP] + methanol + H(+). Its pathway is cofactor biosynthesis; biotin biosynthesis. In terms of biological role, the physiological role of BioH is to remove the methyl group introduced by BioC when the pimeloyl moiety is complete. It allows to synthesize pimeloyl-ACP via the fatty acid synthetic pathway through the hydrolysis of the ester bonds of pimeloyl-ACP esters. The protein is Pimeloyl-[acyl-carrier protein] methyl ester esterase of Neisseria meningitidis serogroup C / serotype 2a (strain ATCC 700532 / DSM 15464 / FAM18).